The primary structure comprises 187 residues: Frequenin-1 (187 aa).

G2 carries N-myristoyl glycine lipidation. EF-hand domains are found at residues E24–G59, D60–G95, N96–M131, and T143–I178. Ca(2+) contacts are provided by D73, N75, D77, S79, E84, D109, D111, D113, Y115, E120, D156, N158, D160, K162, and E167.

This sequence belongs to the recoverin family. In terms of assembly, in contrast to Frq2, does not interact with ric8a. Enriched in synapses, such as the motor nerve endings at neuromuscular junctions. In the embryo, highly expressed in the ventral ganglia.

The protein resides in the cytoplasm. Ca(2+)-dependent modulation of synaptic efficacy. Also plays a role in axon terminal morphology. The chain is Frequenin-1 (Frq1) from Drosophila melanogaster (Fruit fly).